The chain runs to 377 residues: Probable G-protein coupled receptor 27 (377 aa).

Topologically, residues 1 to 24 (MANASEPGGGGGGAEAAALGLRLA) are extracellular. Residue Asn3 is glycosylated (N-linked (GlcNAc...) asparagine). The helical transmembrane segment at 25-45 (TLSLLLCVSLAGNVLFALLIV) threads the bilayer. Topologically, residues 46–56 (RERSLHRAPYY) are cytoplasmic. Residues 57–77 (LLLDLCLADGLRALACLPAVM) form a helical membrane-spanning segment. The Extracellular portion of the chain corresponds to 78 to 98 (LAARRAAAAAGTPPGALGCKL). Cys96 and Cys173 are oxidised to a cystine. A helical transmembrane segment spans residues 99 to 119 (LAFLAALFCFHAAFLLLGVGV). Over 120 to 140 (TRYLAIAHHRFYAERLAGWPC) the chain is Cytoplasmic. A helical transmembrane segment spans residues 141 to 161 (AAMLVCAAWALALAAAFPPVL). Over 162-183 (DGGGADDEDAPCALEQRPDGAP) the chain is Extracellular. Residues 184-204 (GALGFLLLLAAVVGATHLVYL) traverse the membrane as a helical segment. At 205 to 287 (RLLFFIHDRR…FKTEKRLCKM (83 aa)) the chain is on the cytoplasmic side. The chain crosses the membrane as a helical span at residues 288 to 308 (FYAITLLFLLLWGPYVVASYL). At 309-322 (RVLVRPGAVPQAYL) the chain is on the extracellular side. A helical membrane pass occupies residues 323–343 (TASVWLTFAQAGINPVVCFLF). The Cytoplasmic segment spans residues 344-377 (NRELRDCFRAQFPCCQSPQATQATLPCDLKGIGL).

Belongs to the G-protein coupled receptor 1 family. Expressed as a 3.0 kb transcript, in whole brain, hippocampus, striatum, frontal cortex, thalamus, pons and hypothalamus. A lower molecular weight transcript was detected in all regions examined, except the hypothalamus.

The protein localises to the cell membrane. Orphan receptor. Possible candidate for amine-like G-protein coupled receptor. This is Probable G-protein coupled receptor 27 (Gpr27) from Rattus norvegicus (Rat).